Consider the following 547-residue polypeptide: MMALVCDTAVDDIEDMVRITDVTPLQRQAARKSVVPRARKHKQETGEQMQTDSVIPGMQKVWLKTWGCSHNSSDGEYMAGQLAVAGYQITEDSSDADLWLLNSCTVKSPAEDHFRNAIRKAQEQNKKVVLAGCVPQAQPRMDYIKDLSIIGVQQIDRVVEVVDEAIKGHSVRLLGQKKEKGKRLGGARLDLPKIRKNPLIEIISINTGCLNACTYCKTKHARGDLASYPVEELVERVRQSFQEGVCEIWLTSEDTGAYGRDIGSDLPTLLWRLVEEIPEGAMLRLGMTNPPYILEHLEEMSRILQHPRVFSFLHVPLQSASDSVLMEMRREYCCADFTHLVDYLKERVPGITIATDIICGFPGETDEDFEQTLALVRRYRFPSLFINQFYPRPGTPAALMQQLPAHVKKQRTKELSALFHSYRPYDHKMGEQQQVLVTEESFDSQYYVAHNKFYEQVLVPKRPEYLGKMVQVEVYECGKHYMKGRPLEEAPLRTAYTTAPLLKGQVSGHTQAGVCEPQCWMPDGMRILAVVLLLSAVLLALLMEKLL.

The segment at Ala-30–Thr-51 is disordered. In terms of domain architecture, MTTase N-terminal spans Gln-59 to Lys-167. Positions 68, 104, 133, 209, 213, and 216 each coordinate [4Fe-4S] cluster. Residues Arg-195–Asp-426 enclose the Radical SAM core domain. Positions Asp-426–Glu-488 constitute a TRAM domain. Residues Ile-527–Leu-547 form a helical membrane-spanning segment.

This sequence belongs to the methylthiotransferase family. CDKAL1 subfamily. It depends on [4Fe-4S] cluster as a cofactor.

It is found in the endoplasmic reticulum membrane. The enzyme catalyses N(6)-L-threonylcarbamoyladenosine(37) in tRNA + (sulfur carrier)-SH + AH2 + 2 S-adenosyl-L-methionine = 2-methylsulfanyl-N(6)-L-threonylcarbamoyladenosine(37) in tRNA + (sulfur carrier)-H + 5'-deoxyadenosine + L-methionine + A + S-adenosyl-L-homocysteine + 2 H(+). Functionally, catalyzes the methylthiolation of N6-threonylcarbamoyladenosine (t(6)A), leading to the formation of 2-methylthio-N6-threonylcarbamoyladenosine (ms(2)t(6)A) at position 37 in tRNAs that read codons beginning with adenine. This is Threonylcarbamoyladenosine tRNA methylthiotransferase (cdkal1) from Danio rerio (Zebrafish).